The sequence spans 495 residues: Transmembrane protein 161A (495 aa).

An N-terminal signal peptide occupies residues 1-28 (MALMGVQLVVSLLAVSIMQRMAPHLSFA). Residues 29 to 99 (RWLLCNGSLL…VNVMDALVLR (71 aa)) lie on the Extracellular side of the membrane. A glycan (N-linked (GlcNAc...) asparagine) is linked at N34. A helical membrane pass occupies residues 100–120 (FFVEYQWLIDFAVYATGIYLF). At 121 to 135 (TEGYYSVVDASKEVN) the chain is on the cytoplasmic side. The helical transmembrane segment at 136–156 (IASIWCVLTVLFCLRTLYLLM) threads the bilayer. Topologically, residues 157–167 (SHYFLSEEGGE) are extracellular. The helical transmembrane segment at 168 to 188 (RSVCLAFGFLSLLIAMLVLVV) threads the bilayer. Topologically, residues 189 to 227 (REDYLEFGLEPGFTSLFDNFEVFARKQGYEWSVPFTKLS) are cytoplasmic. A helical membrane pass occupies residues 228-248 (VKLGLAVICAFIGALLAFPGL). Topologically, residues 249 to 265 (RLAQTHLDAVQMNADRP) are extracellular. A helical transmembrane segment spans residues 266–286 (MIQILLHMSFLSPLVIIVMWI). Topologically, residues 287–305 (KPIARDFLGNAPMGKTSVT) are cytoplasmic. A helical membrane pass occupies residues 306-326 (LLSSSAFSSVRLWTIVVLCVL). The Extracellular segment spans residues 327–367 (RLLLTRYHLQAYLNLAQKWVEQMKKEAGRIAAIDIQRKVTR). A helical transmembrane segment spans residues 368 to 388 (IFCYLTVVTLQYLIPILLVLF). The Cytoplasmic segment spans residues 389 to 465 (STLALKSLGD…ALLTPIFFRG (77 aa)). Residues 466-486 (IFAFLTWWVAACQLISSLFGI) form a helical membrane-spanning segment. The Extracellular segment spans residues 487-495 (YFHQYLMHN).

This sequence belongs to the TMEM161 family.

It localises to the membrane. In terms of biological role, may play a role in protection against oxidative stress. This Danio rerio (Zebrafish) protein is Transmembrane protein 161A (tmem161a).